The primary structure comprises 842 residues: DNA mismatch repair protein MutS (842 aa).

596 to 603 (GPNMSGKS) provides a ligand contact to ATP.

It belongs to the DNA mismatch repair MutS family.

Functionally, this protein is involved in the repair of mismatches in DNA. It is possible that it carries out the mismatch recognition step. This protein has a weak ATPase activity. This Exiguobacterium sp. (strain ATCC BAA-1283 / AT1b) protein is DNA mismatch repair protein MutS.